Here is a 332-residue protein sequence, read N- to C-terminus: Cell growth regulator with RING finger domain protein 1 (332 aa).

An RING-type zinc finger spans residues 274–309; it reads CVVCQNGTVNWVLLPCRHTCLCDGCVKYFQQCPMCR.

As to expression, ubiquitously expressed with high expression in testis and the cerebellum.

It localises to the nucleus. The protein localises to the endoplasmic reticulum. Able to inhibit growth in several cell lines. In Homo sapiens (Human), this protein is Cell growth regulator with RING finger domain protein 1 (CGRRF1).